The chain runs to 754 residues: 5-methyltetrahydropteroyltriglutamate--homocysteine methyltransferase (754 aa).

5-methyltetrahydropteroyltri-L-glutamate is bound by residues 17-20 and lysine 117; that span reads RELK. Residues 431-433 and glutamate 484 contribute to the L-homocysteine site; that span reads IGS. Residues 431–433 and glutamate 484 contribute to the L-methionine site; that span reads IGS. 5-methyltetrahydropteroyltri-L-glutamate is bound by residues 515–516 and tryptophan 561; that span reads RC. Residue aspartate 599 coordinates L-homocysteine. L-methionine is bound at residue aspartate 599. Glutamate 605 is a binding site for 5-methyltetrahydropteroyltri-L-glutamate. Zn(2+)-binding residues include histidine 641, cysteine 643, and glutamate 665. Histidine 694 serves as the catalytic Proton donor. Cysteine 726 serves as a coordination point for Zn(2+).

It belongs to the vitamin-B12 independent methionine synthase family. Zn(2+) is required as a cofactor.

It carries out the reaction 5-methyltetrahydropteroyltri-L-glutamate + L-homocysteine = tetrahydropteroyltri-L-glutamate + L-methionine. Its pathway is amino-acid biosynthesis; L-methionine biosynthesis via de novo pathway; L-methionine from L-homocysteine (MetE route): step 1/1. In terms of biological role, catalyzes the transfer of a methyl group from 5-methyltetrahydrofolate to homocysteine resulting in methionine formation. The chain is 5-methyltetrahydropteroyltriglutamate--homocysteine methyltransferase from Salmonella arizonae (strain ATCC BAA-731 / CDC346-86 / RSK2980).